The following is a 363-amino-acid chain: MKKTALYAWHEAAGAKIIDFGGYLMPVQYSGIIAEHTCVRTSAGLFDVSHMGNFMVKGRGAKAFLQHMTSNDVDKLSDGQAQYTLLLYPEGGIVDDLIIYRIDADTWFMVVNASNMEKDYSWLQEHLGSFEGVQLENHTEELSLIALQGPRSMEILDRVFTGGECSGIKPFHFRTVPFNGREVIVAATGYTGERGVEISVPNDAATALWVALMEAGSADGIQPIGLGARDTLRLEMGYPLYGHEINRETSPIEARLKWVTRLDKGNFVGRESCVAVDINPQRTVVGFMMHERAIPRQGFTVYNRDRKPLGSVCSGTMSPTLKQPIGTADVPRGYMKSGTPLYLEVRGKFYKGEVVKLPFVNRA.

This sequence belongs to the GcvT family. In terms of assembly, the glycine cleavage system is composed of four proteins: P, T, L and H.

The catalysed reaction is N(6)-[(R)-S(8)-aminomethyldihydrolipoyl]-L-lysyl-[protein] + (6S)-5,6,7,8-tetrahydrofolate = N(6)-[(R)-dihydrolipoyl]-L-lysyl-[protein] + (6R)-5,10-methylene-5,6,7,8-tetrahydrofolate + NH4(+). Its function is as follows. The glycine cleavage system catalyzes the degradation of glycine. The protein is Aminomethyltransferase of Prosthecochloris aestuarii (strain DSM 271 / SK 413).